The following is a 430-amino-acid chain: Adenylosuccinate synthetase (430 aa).

GTP is bound by residues G13–K19 and G41–T43. The Proton acceptor role is filled by D14. Residues D14 and G41 each coordinate Mg(2+). Residues D14–K17, N39–H42, T130, R144, Q225, T240, and R304 contribute to the IMP site. H42 acts as the Proton donor in catalysis. Position 300-306 (S300–R306) interacts with substrate. GTP contacts are provided by residues R306, K332–D334, and S414–G416.

Belongs to the adenylosuccinate synthetase family. In terms of assembly, homodimer. Mg(2+) is required as a cofactor.

It is found in the cytoplasm. The catalysed reaction is IMP + L-aspartate + GTP = N(6)-(1,2-dicarboxyethyl)-AMP + GDP + phosphate + 2 H(+). Its pathway is purine metabolism; AMP biosynthesis via de novo pathway; AMP from IMP: step 1/2. Functionally, plays an important role in the de novo pathway of purine nucleotide biosynthesis. Catalyzes the first committed step in the biosynthesis of AMP from IMP. The sequence is that of Adenylosuccinate synthetase from Alcanivorax borkumensis (strain ATCC 700651 / DSM 11573 / NCIMB 13689 / SK2).